A 678-amino-acid polypeptide reads, in one-letter code: Glycine--tRNA ligase beta subunit (678 aa).

The protein belongs to the class-II aminoacyl-tRNA synthetase family. In terms of assembly, tetramer of two alpha and two beta subunits.

It localises to the cytoplasm. The enzyme catalyses tRNA(Gly) + glycine + ATP = glycyl-tRNA(Gly) + AMP + diphosphate. This chain is Glycine--tRNA ligase beta subunit, found in Sulfurihydrogenibium sp. (strain YO3AOP1).